We begin with the raw amino-acid sequence, 734 residues long: Threonine--tRNA ligase, cytoplasmic (734 aa).

A disordered region spans residues 1–41 (MSASEAGVTEQVKKLSVKDSSNDAVKPNKKENKKSKQQSLY). The span at 11-30 (QVKKLSVKDSSNDAVKPNKK) shows a compositional bias: basic and acidic residues. Positions 69-135 (SMPRVPLKIV…EGEANEEIKL (67 aa)) constitute a TGS domain. A phosphoserine mark is found at Ser-195 and Ser-289. 2 positions are modified to phosphothreonine: Thr-297 and Thr-381. Residues Ser-453 and Ser-457 each carry the phosphoserine modification. Position 460 is a phosphothreonine (Thr-460). Ser-605 is subject to Phosphoserine.

The protein belongs to the class-II aminoacyl-tRNA synthetase family.

Its subcellular location is the cytoplasm. The enzyme catalyses tRNA(Thr) + L-threonine + ATP = L-threonyl-tRNA(Thr) + AMP + diphosphate + H(+). This chain is Threonine--tRNA ligase, cytoplasmic (THS1), found in Saccharomyces cerevisiae (strain ATCC 204508 / S288c) (Baker's yeast).